Reading from the N-terminus, the 158-residue chain is Cyclic pyranopterin monophosphate synthase (158 aa).

Residues 75–77 (LCH) and 113–114 (ME) contribute to the substrate site. The active site involves D128.

It belongs to the MoaC family. In terms of assembly, homohexamer; trimer of dimers.

The catalysed reaction is (8S)-3',8-cyclo-7,8-dihydroguanosine 5'-triphosphate = cyclic pyranopterin phosphate + diphosphate. The protein operates within cofactor biosynthesis; molybdopterin biosynthesis. Its function is as follows. Catalyzes the conversion of (8S)-3',8-cyclo-7,8-dihydroguanosine 5'-triphosphate to cyclic pyranopterin monophosphate (cPMP). The chain is Cyclic pyranopterin monophosphate synthase from Ralstonia pickettii (strain 12J).